We begin with the raw amino-acid sequence, 269 residues long: Protein shisa-1 (269 aa).

An N-terminal signal peptide occupies residues 1–18; sequence MEFIVLLTVCALLGLSCG. Over 19 to 98 the chain is Extracellular; sequence QHGEYCHGWT…LPPTVPTYFP (80 aa). Residues 99–119 traverse the membrane as a helical segment; it reads FLLVGSIFVSFVILGSLVGLC. The Cytoplasmic segment spans residues 120-269; it reads CCKCLKPEDD…TVCSGSPSKC (150 aa). Positions 129-167 are disordered; it reads DTQVSGPAPIQSRLLDQDPSTDTSRHSSSSSASMPRPPI. Low complexity predominate over residues 146–162; the sequence is DPSTDTSRHSSSSSASM.

This sequence belongs to the shisa family. In terms of assembly, interacts with immature forms of fzd8 and fgfr.

It is found in the endoplasmic reticulum. The protein resides in the membrane. Functionally, required for head formation during gastrulation. Functions as an inhibitor for the caudalizing signals wnt and fgf, does not inhibit bmp, activin and nodal signaling in head formation process. Induces retention of fzd8 in the endoplasmic reticulum and inhibits trafficking of fzd8 to the cell surface. In Xenopus laevis (African clawed frog), this protein is Protein shisa-1 (shisa1).